A 376-amino-acid chain; its full sequence is 23S rRNA (uracil(747)-C(5))-methyltransferase RlmC (376 aa).

Cys-3, Cys-11, Cys-14, and Cys-87 together coordinate [4Fe-4S] cluster. The S-adenosyl-L-methionine site is built by Gln-212, Phe-241, Glu-262, and Asn-307. The Nucleophile role is filled by Cys-334.

The protein belongs to the class I-like SAM-binding methyltransferase superfamily. RNA M5U methyltransferase family. RlmC subfamily.

It carries out the reaction uridine(747) in 23S rRNA + S-adenosyl-L-methionine = 5-methyluridine(747) in 23S rRNA + S-adenosyl-L-homocysteine + H(+). Functionally, catalyzes the formation of 5-methyl-uridine at position 747 (m5U747) in 23S rRNA. The chain is 23S rRNA (uracil(747)-C(5))-methyltransferase RlmC from Yersinia pseudotuberculosis serotype I (strain IP32953).